Here is a 315-residue protein sequence, read N- to C-terminus: Olfactory receptor 3A1 (315 aa).

The Extracellular segment spans residues 1 to 28 (MQPESGANGTVIAEFILLGLLEAPGLQP). Asparagine 8 carries N-linked (GlcNAc...) asparagine glycosylation. Residues 29–52 (VVFVLFLFAYLVTVGGNLSILAAV) traverse the membrane as a helical segment. At 53 to 60 (LVEPKLHS) the chain is on the cytoplasmic side. A helical membrane pass occupies residues 61-82 (PMYFFLGNLSVLDVGCISVTVP). Residues 83 to 103 (SMLSRLLSRKRAVPCGACLTQ) are Extracellular-facing. Cysteines 100 and 192 form a disulfide. A helical membrane pass occupies residues 104-123 (LFFFHLFVGVDCFLLTAMAY). The Cytoplasmic portion of the chain corresponds to 124 to 143 (DRFLAICRPLTYSTRMSQTV). The helical transmembrane segment at 144-161 (QRMLVAASWACAFTNALT) threads the bilayer. Over 162 to 199 (HTVAMSTLNFCGPNEVNHFYCDLPQLFQLSCSSTQLNE) the chain is Extracellular. A helical transmembrane segment spans residues 200-223 (LLLFAVGFIMAGTPMALIVISYIH). The Cytoplasmic portion of the chain corresponds to 224–240 (VAAAVLRIRSVEGRKKA). A helical transmembrane segment spans residues 241-264 (FSTCGSHLTVVAMFYGSGIFNYMR). Over 265-275 (LGSTKLSDKDK) the chain is Extracellular. The helical transmembrane segment at 276–295 (AVGIFNTVINPMVNPIIYRF) threads the bilayer. Over 296–315 (RNPEVQSAIWRMLTGRRSLA) the chain is Cytoplasmic.

It belongs to the G-protein coupled receptor 1 family.

The protein resides in the cell membrane. Odorant receptor. In Pan troglodytes (Chimpanzee), this protein is Olfactory receptor 3A1 (OR3A1).